Reading from the N-terminus, the 128-residue chain is Glycine cleavage system H protein (128 aa).

One can recognise a Lipoyl-binding domain in the interval 24-106 (VYSVGITEHA…YTDGWLFSIK (83 aa)). Residue lysine 65 is modified to N6-lipoyllysine.

The protein belongs to the GcvH family. The glycine cleavage system is composed of four proteins: P, T, L and H. (R)-lipoate serves as cofactor.

In terms of biological role, the glycine cleavage system catalyzes the degradation of glycine. The H protein shuttles the methylamine group of glycine from the P protein to the T protein. This Yersinia pseudotuberculosis serotype O:1b (strain IP 31758) protein is Glycine cleavage system H protein.